Reading from the N-terminus, the 457-residue chain is Cystathionine beta-lyase, chloroplastic (457 aa).

The transit peptide at methionine 1–cysteine 51 directs the protein to the chloroplast. Pyridoxal 5'-phosphate contacts are provided by tyrosine 120, arginine 122, glycine 150, methionine 151, serine 268, and threonine 270. Lysine 271 is modified (N6-(pyridoxal phosphate)lysine).

It belongs to the trans-sulfuration enzymes family. Forms homodimers. May form homotetramers from two homodimers. The cofactor is pyridoxal 5'-phosphate.

The protein resides in the plastid. It localises to the chloroplast. The enzyme catalyses L,L-cystathionine + H2O = L-homocysteine + pyruvate + NH4(+). The catalysed reaction is an S-substituted L-cysteine + H2O = a thiol + pyruvate + NH4(+). Functionally, catalyzes the degradation of cystathionine. In Mimosa pudica (Sensitive plant), this protein is Cystathionine beta-lyase, chloroplastic.